A 117-amino-acid polypeptide reads, in one-letter code: NADH-ubiquinone oxidoreductase chain 3 (117 aa).

A run of 3 helical transmembrane segments spans residues 4–24 (IILIASLILTIVTIVMFLASI), 60–80 (ITIIFLIFDVEIALILPMIII), and 86–106 (IMIWTTTSIIFILILLIGLYH).

It belongs to the complex I subunit 3 family.

It is found in the mitochondrion membrane. The catalysed reaction is a ubiquinone + NADH + 5 H(+)(in) = a ubiquinol + NAD(+) + 4 H(+)(out). In terms of biological role, core subunit of the mitochondrial membrane respiratory chain NADH dehydrogenase (Complex I) that is believed to belong to the minimal assembly required for catalysis. Complex I functions in the transfer of electrons from NADH to the respiratory chain. The immediate electron acceptor for the enzyme is believed to be ubiquinone. This is NADH-ubiquinone oxidoreductase chain 3 (mt:ND3) from Drosophila subobscura (Fruit fly).